A 757-amino-acid chain; its full sequence is Filensin (757 aa).

Residues 1–39 are head; it reads MYRRSYVFQTRKEQYERAEEAPRAAEPDRLAEARAAAPN. Ser5 carries the post-translational modification Phosphoserine. The IF rod domain maps to 39–319; sequence NLAALQGLGE…RIIENEGNRL (281 aa). The tract at residues 40-74 is coil 1A; that stretch reads LAALQGLGERVAAHVQRARALEQRHAVLRRQLDAF. The residue at position 41 (Ala41) is an N-acetylalanine. A linker 1 region spans residues 75-83; it reads QRLDELAGP. The coil 1B stretch occupies residues 84-183; it reads EDALARHVEG…RYKKNLLEIQ (100 aa). Residues 184–200 are linker 12; the sequence is TYVTILQQIIQTTPQAA. Residues 201-319 form a coil 2 region; the sequence is AITSGMREEK…RIIENEGNRL (119 aa). The tract at residues 320-756 is tail; it reads SSAFIETPIT…KKLGEKGSSS (437 aa). Ser340 and Ser419 each carry phosphoserine. Disordered stretches follow at residues 406–436 and 493–705; these read EGES…GGKI and GVVV…PPRK. A lipid anchor (N-myristoyl glycine) is attached at Gly433. The segment covering 493–512 has biased composition (low complexity); that stretch reads GVVVSKGDDSVPPDSGVEPS. The residue at position 512 (Ser512) is a Phosphoserine. Residues 528-658 are compositionally biased toward basic and acidic residues; it reads QEKEDGLKEE…KQDDQKEEGA (131 aa). Repeat 1 spans residues 532 to 545; that stretch reads DGLKEEGGPPEGKG. Positions 532 to 622 are 7 X 14 AA tandem repeats; that stretch reads DGLKEEGGPP…EEEGPLQKKE (91 aa). Residues 546–552 form a 2; truncated repeat; that stretch reads EPPEGKG. 5 repeat units span residues 553 to 566, 567 to 580, 581 to 594, 595 to 608, and 609 to 622. A phosphothreonine mark is found at Thr628 and Thr674. Ser701, Ser754, and Ser755 each carry phosphoserine.

It belongs to the intermediate filament family. Part of a complex required for lens intermediate filament formation composed of BFSP1, BFSP2 and CRYAA. Identified in a complex that contains VIM, EZR, AHNAK, BFSP1, BFSP2, ANK2, PLEC, PRX and spectrin. Found in a complex composed of PPL (via C-terminal linker domain), BFSP1 and BFSP2 in the retinal lens. Within the complex interacts with BFSP2. Interacts (via C-terminus) with MIP (via C-terminus) in aged lens fiber cells. Post-translationally, proteolytically cleaved during lens cell fiber differentiation with increased fragmentation as fiber cell age increases. Myristoylated at Gly-433 following proteolytic cleavage at Asp-432. In terms of processing, acetylated at Ala-41 following proteolytic cleavage at Leu-40. As to expression, abundantly expressed in both the inner and outer cortex of the retina, expressed at a lower level in the nucleus of the retina (at protein level). Detected in eye lens fiber cells (at protein level).

Its subcellular location is the cell membrane. The protein resides in the cytoplasm. It localises to the cytoskeleton. It is found in the cell cortex. Its function is as follows. Required for the correct formation of lens intermediate filaments as part of a complex composed of BFSP1, BFSP2 and CRYAA. Involved in altering the calcium regulation of MIP water permeability. The polypeptide is Filensin (BFSP1) (Bos taurus (Bovine)).